Reading from the N-terminus, the 405-residue chain is Arginine biosynthesis bifunctional protein ArgJ (405 aa).

6 residues coordinate substrate: Thr-152, Lys-178, Thr-189, Glu-276, Asn-400, and Thr-405. The Nucleophile role is filled by Thr-189.

This sequence belongs to the ArgJ family. Heterotetramer of two alpha and two beta chains.

Its subcellular location is the cytoplasm. The catalysed reaction is N(2)-acetyl-L-ornithine + L-glutamate = N-acetyl-L-glutamate + L-ornithine. It carries out the reaction L-glutamate + acetyl-CoA = N-acetyl-L-glutamate + CoA + H(+). It participates in amino-acid biosynthesis; L-arginine biosynthesis; L-ornithine and N-acetyl-L-glutamate from L-glutamate and N(2)-acetyl-L-ornithine (cyclic): step 1/1. The protein operates within amino-acid biosynthesis; L-arginine biosynthesis; N(2)-acetyl-L-ornithine from L-glutamate: step 1/4. Functionally, catalyzes two activities which are involved in the cyclic version of arginine biosynthesis: the synthesis of N-acetylglutamate from glutamate and acetyl-CoA as the acetyl donor, and of ornithine by transacetylation between N(2)-acetylornithine and glutamate. The sequence is that of Arginine biosynthesis bifunctional protein ArgJ from Pseudomonas fluorescens (strain ATCC BAA-477 / NRRL B-23932 / Pf-5).